We begin with the raw amino-acid sequence, 92 residues long: C-C motif chemokine 22 (92 aa).

The signal sequence occupies residues 1–24 (MATLRVPLLVALVLLAVAIQTSDA). 2 disulfide bridges follow: cysteine 36/cysteine 60 and cysteine 37/cysteine 76.

The protein belongs to the intercrine beta (chemokine CC) family. In terms of tissue distribution, expressed by activated splenic B-lymphocytes and dendritic cells. Low expression in lung, thymocytes, lymph node, and unstimulated splenic cells.

The protein resides in the secreted. Functionally, chemotactic for activated T-lymphocytes. May play an important role in the collaboration of dendritic cells and B-lymphocytes with T-cells in immune responses. The protein is C-C motif chemokine 22 (Ccl22) of Mus musculus (Mouse).